Reading from the N-terminus, the 66-residue chain is uncharacterized protein (66 aa).

This is an uncharacterized protein from Human cytomegalovirus (strain AD169) (HHV-5).